The chain runs to 81 residues: Small ribosomal subunit protein bS16 (81 aa).

It belongs to the bacterial ribosomal protein bS16 family.

This Lachnospira eligens (strain ATCC 27750 / DSM 3376 / VPI C15-48 / C15-B4) (Eubacterium eligens) protein is Small ribosomal subunit protein bS16.